Consider the following 507-residue polypeptide: F-box only protein 31 (507 aa).

Residues 19–42 (RQQRRGPAETAAADSEADTDPEEE) form a disordered region. Ser-33 is modified (phosphoserine). Residues 33-42 (SEADTDPEEE) show a composition bias toward acidic residues. Thr-37 is subject to Phosphothreonine. The D box signature appears at 50-55 (RCSLLE). The F-box domain occupies 50-96 (RCSLLELPPELLVEIFASLPGTDLPSLAQVCSRFRRILHTDTIWRRR). Cys-192, His-200, Cys-216, and His-222 together coordinate Zn(2+). Ser-264 is subject to Phosphoserine; by ATM. A DDL motif motif is present at residues 283 to 285 (DDL). The disordered stretch occupies residues 364–421 (RQEQEAGEGPAPHREPAVKDPEGPPAKASKEAGPGAEAAEQSSTSGQGQPFVLPAGVS). Residues 374 to 385 (APHREPAVKDPE) are compositionally biased toward basic and acidic residues. A Phosphoserine modification is found at Ser-448.

Belongs to the FBXO31 family. Part of a SCF (SKP1-cullin-F-box) protein ligase complex SCF(FBXO31) composed of CUL1, SKP1, RBX1 and FBXO31. Interacts (when phosphorylated at Ser-33) with CDC20, promoting ubiquitination by the APC/C complex. Post-translationally, phosphorylation at Ser-264 by ATM following gamma-irradiation results in its stabilization. Phosphorylation at Ser-448 in absence of stress promotes its ubiquitination and degradation by the SCF(FBXO46) complex. Phosphorylation at Ser-33 by AKT1 promotes association with CDC20 and ubiquitination by the APC/C complex. Ubiquitinated by the SCF(FBXO46) complex in absence of stress, promoting its degradation. Ubiquitinated by the APC/C complex following phosphorylation at Ser-33, leading to its degradation by the proteasome.

It localises to the cytoplasm. The protein resides in the cytoskeleton. It is found in the microtubule organizing center. The protein localises to the centrosome. The protein operates within protein modification; protein ubiquitination. In terms of biological role, substrate-recognition component of the SCF(FBXO31) protein ligase complex, which specifically mediates the ubiquitination of proteins amidated at their C-terminus in response to oxidative stress, leading to their degradation by the proteasome. FBXO31 specifically recognizes and binds C-terminal peptides bearing an amide: C-terminal amidation in response to oxidative stress takes place following protein fragmentation. The SCF(FBXO31) also plays a role in G1 arrest following DNA damage by mediating ubiquitination of phosphorylated cyclin-D1 (CCND1), promoting its degradation by the proteasome, resulting in G1 arrest. The SCF(FBXO31) complex is however not a major regulator of CCND1 stability during the G1/S transition. In response to genotoxic stress, the SCF(FBXO31) complex directs ubiquitination and degradation of phosphorylated MDM2, thereby promoting p53/TP53-mediated DNA damage response. SCF(FBXO31) complex is required for genomic integrity by catalyzing ubiquitination and degradation of cyclin-A (CCNA1 and/or CCNA2) during the G1 phase. In response to genotoxic stress, the SCF(FBXO31) complex directs ubiquitination and degradation of phosphorylated FBXO46 and MAP2K6. SCF(FBXO31) complex promotes ubiquitination and degradation of CDT1 during the G2 phase to prevent re-replication. The SCF(FBXO31) complex also mediates ubiquitination and degradation of DUSP6, OGT and PARD6A. The chain is F-box only protein 31 from Rattus norvegicus (Rat).